The primary structure comprises 186 residues: MPSFIKSCFSSNDWITDDKKEICFIGRSNVGKSSLINALANAKIAKTSNTPGRTQLANFYDFDKFRLIDLPGYGYAKVSKSKHFELSKIISEYIYLRKNLVAVFQIIDISVITDLDLQMSELLSNRFNQHYIVLNKADKEAKSYFDNNFAKIAAKLKKDKENIVCVSAKNKTNIPNLKKLIGSVIL.

One can recognise an EngB-type G domain in the interval 18–186; the sequence is DKKEICFIGR…LKKLIGSVIL (169 aa). GTP is bound by residues 26–33, 52–56, 69–72, 135–138, and 166–168; these read GRSNVGKS, GRTQL, DLPG, NKAD, and VSA. 2 residues coordinate Mg(2+): Ser-33 and Thr-54.

It belongs to the TRAFAC class TrmE-Era-EngA-EngB-Septin-like GTPase superfamily. EngB GTPase family. Mg(2+) serves as cofactor.

In terms of biological role, necessary for normal cell division and for the maintenance of normal septation. This Malacoplasma penetrans (strain HF-2) (Mycoplasma penetrans) protein is Probable GTP-binding protein EngB.